The sequence spans 368 residues: BTB/POZ and TAZ domain-containing protein 5 (368 aa).

A disordered region spans residues 1-25 (MENMDDFSPENVLAPPPPPPPMKKS). The BTB domain maps to 55 to 123 (ADVLIHTDDN…LYSSCYEKQD (69 aa)). The TAZ-type zinc finger occupies 233 to 324 (QTYTQLYEAM…SEQCKVPLCS (92 aa)). The segment at 335–358 (RKDEKRWKLLVRNVLSTKRIGGSP) is caM-binding.

Interacts with CUL3A. In terms of tissue distribution, preferentially expressed in young leaves, roots and stems.

Its subcellular location is the cytoplasm. It functions in the pathway protein modification; protein ubiquitination. Its function is as follows. May act as a substrate-specific adapter of an E3 ubiquitin-protein ligase complex (CUL3-RBX1-BTB) which mediates the ubiquitination and subsequent proteasomal degradation of target proteins. The sequence is that of BTB/POZ and TAZ domain-containing protein 5 (BT5) from Arabidopsis thaliana (Mouse-ear cress).